The primary structure comprises 970 residues: Protein CLASP-3 (970 aa).

Disordered stretches follow at residues 314–377 (SRLA…QKAR) and 651–675 (NGISSGSGGSGNNHPKATPLRETPH). The span at 344 to 355 (GSRTRTSSITSN) shows a compositional bias: polar residues. The HEAT repeat unit spans residues 905–943 (ITPCVIKAYQSTSSSVRKTVVYCLVAMVNRVGEQRMAPH).

This sequence belongs to the CLASP family.

It localises to the cytoplasm. The protein resides in the cytoskeleton. Functionally, microtubule plus-end tracking protein that promotes the stabilization of dynamic microtubules. This Caenorhabditis briggsae protein is Protein CLASP-3 (cls-3).